Consider the following 81-residue polypeptide: Large ribosomal subunit protein bL31B (81 aa).

This sequence belongs to the bacterial ribosomal protein bL31 family. Type B subfamily. As to quaternary structure, part of the 50S ribosomal subunit.

This chain is Large ribosomal subunit protein bL31B, found in Borreliella burgdorferi (strain ZS7) (Borrelia burgdorferi).